Consider the following 180-residue polypeptide: MIMSLPQCSHLRLSILAATAAMLMVITTAQIGGQVIQVELWCVAKNNAEDSSLQTAIEWACGQGGADCGPIQQGGPCNDPTDVQKMASFVFNNYYLKNGEEDEACNFNNNAALTSLNPSQGTCKYPSSKGANNGRLADDTSMGAGQADMSRGGRPISSSWMVTFIGFGSLLTMTWIIHHL.

An N-terminal signal peptide occupies residues 1 to 29 (MIMSLPQCSHLRLSILAATAAMLMVITTA). The cysteines at positions 42 and 105 are disulfide-linked. The interval 126-151 (PSSKGANNGRLADDTSMGAGQADMSR) is disordered. Residue serine 157 is the site of GPI-anchor amidated serine attachment. The propeptide at 158-180 (SSWMVTFIGFGSLLTMTWIIHHL) is removed in mature form.

Contains two additional disulfide bonds.

Its subcellular location is the cell membrane. The protein localises to the cell junction. It localises to the plasmodesma. This chain is PLASMODESMATA CALLOSE-BINDING PROTEIN 5 (PDCB5), found in Arabidopsis thaliana (Mouse-ear cress).